Here is a 169-residue protein sequence, read N- to C-terminus: Lipoprotein signal peptidase (169 aa).

4 consecutive transmembrane segments (helical) span residues 10-30, 41-61, 68-88, and 94-114; these read LPWLWITVLVFVLDQVSKAFF, VVIPDLFSWTLAYNTGAAFSF, WQRWLFALIAIVVSAILVVWL, and GETWLAVALALVLGGALGNLY. Residues Asp124 and Asp143 contribute to the active site. A helical transmembrane segment spans residues 135 to 155; sequence YFPAFNLADSAITVGAVMLAL.

The protein belongs to the peptidase A8 family.

The protein resides in the cell inner membrane. The enzyme catalyses Release of signal peptides from bacterial membrane prolipoproteins. Hydrolyzes -Xaa-Yaa-Zaa-|-(S,diacylglyceryl)Cys-, in which Xaa is hydrophobic (preferably Leu), and Yaa (Ala or Ser) and Zaa (Gly or Ala) have small, neutral side chains.. It participates in protein modification; lipoprotein biosynthesis (signal peptide cleavage). This protein specifically catalyzes the removal of signal peptides from prolipoproteins. This is Lipoprotein signal peptidase from Pseudomonas paraeruginosa (strain DSM 24068 / PA7) (Pseudomonas aeruginosa (strain PA7)).